We begin with the raw amino-acid sequence, 297 residues long: Thiosulfate sulfurtransferase (297 aa).

N6-acetyllysine; alternate is present on K14. K14 is modified (N6-succinyllysine; alternate). Residues 25–143 enclose the Rhodanese 1 domain; the sequence is VGPSLRVLDA…WLKEGHPVTS (119 aa). O-linked (GlcNAc) serine glycosylation occurs at S35. S38 carries the post-translational modification Phosphoserine. K136 carries the post-translational modification N6-acetyllysine; alternate. K136 bears the N6-succinyllysine; alternate mark. A hinge region spans residues 144-159; that stretch reads EPSRPEPAVFKATLNR. K163 bears the N6-acetyllysine mark. Residues 173-288 form the Rhodanese 2 domain; that stretch reads QSKRFQLVDS…WFRRAPPETR (116 aa). Residue K175 is modified to N6-acetyllysine; alternate. K175 is modified (N6-succinyllysine; alternate). A substrate-binding site is contributed by R187. K224 is subject to N6-acetyllysine; alternate. K224 bears the N6-succinyllysine; alternate mark. K236 carries the post-translational modification N6-acetyllysine. At K237 the chain carries N6-acetyllysine; alternate. K237 carries the post-translational modification N6-succinyllysine; alternate. C248 (cysteine persulfide intermediate) is an active-site residue. K250 lines the substrate pocket.

Monomer. Expressed in numerous tissues.

The protein resides in the mitochondrion matrix. It carries out the reaction thiosulfate + hydrogen cyanide = thiocyanate + sulfite + 2 H(+). Functionally, together with MRPL18, acts as a mitochondrial import factor for the cytosolic 5S rRNA. Only the nascent unfolded cytoplasmic form is able to bind to the 5S rRNA. Involved in the formation of iron-sulfur complexes, cyanide detoxification or modification of sulfur-containing enzymes. Other thiol compounds, besides cyanide, can act as sulfur ion acceptors. Also has weak mercaptopyruvate sulfurtransferase (MST) activity. In Rattus norvegicus (Rat), this protein is Thiosulfate sulfurtransferase (Tst).